The sequence spans 140 residues: Mercuric transport protein MerC (140 aa).

Topologically, residues Gly2 to Lys10 are cytoplasmic. Residues Thr11 to Ala31 traverse the membrane as a helical segment. 2 residues coordinate Hg(2+): Gly22 and Ala25. At Ser32–Glu46 the chain is on the periplasmic side. The chain crosses the membrane as a helical span at residues Gly47 to Leu67. The Cytoplasmic segment spans residues Gly68 to Ser78. The chain crosses the membrane as a helical span at residues Leu79–Trp99. The Periplasmic segment spans residues Trp100 to Tyr106. The helical transmembrane segment at Val107 to Arg127 threads the bilayer. Residues Cys128 to Leu140 are Cytoplasmic-facing.

It is found in the cell inner membrane. With respect to regulation, uptake of Hg(2+) is decreased by iodoacetamide and iodoacetate, and is completely inhibited by the thiol-modifying reagent N-ethylmaleimide (NEM). In terms of biological role, involved in mercuric ion uptake and binding. MerC-mediated Hg(2+) uptake does not require MerP. The sequence is that of Mercuric transport protein MerC from Shigella flexneri.